We begin with the raw amino-acid sequence, 164 residues long: ATP synthase subunit b (164 aa).

A helical transmembrane segment spans residues 6 to 26; the sequence is GELVGNFILVTGSVIVLLLLI.

Belongs to the ATPase B chain family. In terms of assembly, F-type ATPases have 2 components, F(1) - the catalytic core - and F(0) - the membrane proton channel. F(1) has five subunits: alpha(3), beta(3), gamma(1), delta(1), epsilon(1). F(0) has three main subunits: a(1), b(2) and c(10-14). The alpha and beta chains form an alternating ring which encloses part of the gamma chain. F(1) is attached to F(0) by a central stalk formed by the gamma and epsilon chains, while a peripheral stalk is formed by the delta and b chains.

The protein resides in the cell membrane. Functionally, f(1)F(0) ATP synthase produces ATP from ADP in the presence of a proton or sodium gradient. F-type ATPases consist of two structural domains, F(1) containing the extramembraneous catalytic core and F(0) containing the membrane proton channel, linked together by a central stalk and a peripheral stalk. During catalysis, ATP synthesis in the catalytic domain of F(1) is coupled via a rotary mechanism of the central stalk subunits to proton translocation. Its function is as follows. Component of the F(0) channel, it forms part of the peripheral stalk, linking F(1) to F(0). In Streptococcus pyogenes serotype M12 (strain MGAS2096), this protein is ATP synthase subunit b.